The primary structure comprises 461 residues: Asparagine--tRNA ligase (461 aa).

It belongs to the class-II aminoacyl-tRNA synthetase family. As to quaternary structure, homodimer.

It is found in the cytoplasm. It carries out the reaction tRNA(Asn) + L-asparagine + ATP = L-asparaginyl-tRNA(Asn) + AMP + diphosphate + H(+). The polypeptide is Asparagine--tRNA ligase (Solibacter usitatus (strain Ellin6076)).